Consider the following 219-residue polypeptide: MFSSTRRAEGPCATELTQVSSLLPPRGPYEFSLLPTLTRPLEDLSKCIEGARQTSATANGYSPTGLVPLADSILEICQAACTAYGLVDGAIAAGVGTGSSDNSPTATGIGAAGLTGDRPSSSGASTWRCVKTPMTLGSLTLQNEEESLLARQIVYAVLTSLSALLREVYVREKDVVSETDVVGEGGVGAGAALYGREGAGAVSQCLSRVLALLGKIVPE.

Positions T97–A124 are disordered. The span at T105–G116 shows a compositional bias: low complexity.

It functions in the pathway polyketide biosynthesis. Its function is as follows. Part of the gene cluster that mediates the biosynthesis of asperlin, a polyketide showing anti-inflammatory, antitumor and antibiotic activities. The first step of the asperlin biosynthesis is the production of the intermediate 2,4,6-octatrienoic acid by the highly redusing polyketide synthase alnA with cleavage of the PKS product by the esterase alnB. 2,4,6-octatrienoic acid is further converted to asperlin via several steps involving the remaining enzymes from the cluster. The protein is Asperlin biosynthesis cluster protein I of Emericella nidulans (strain FGSC A4 / ATCC 38163 / CBS 112.46 / NRRL 194 / M139) (Aspergillus nidulans).